The primary structure comprises 130 residues: MSMQDPIADMLTRIRNGQAAKHVSVKMPSAKLKIAIAQMLKEEGYITDYAVADEAKPELEITLKYFQGQPVVETIQRVSRPGLRIYKGKNELPKVMGGLGVAIVSTSKGLMTDRTARQNGMGGEVICYVA.

Belongs to the universal ribosomal protein uS8 family. As to quaternary structure, part of the 30S ribosomal subunit. Contacts proteins S5 and S12.

Its function is as follows. One of the primary rRNA binding proteins, it binds directly to 16S rRNA central domain where it helps coordinate assembly of the platform of the 30S subunit. The chain is Small ribosomal subunit protein uS8 from Shewanella halifaxensis (strain HAW-EB4).